The primary structure comprises 287 residues: ATP synthase gamma chain (287 aa).

This sequence belongs to the ATPase gamma chain family. As to quaternary structure, F-type ATPases have 2 components, CF(1) - the catalytic core - and CF(0) - the membrane proton channel. CF(1) has five subunits: alpha(3), beta(3), gamma(1), delta(1), epsilon(1). CF(0) has three main subunits: a, b and c.

The protein localises to the cell inner membrane. Its function is as follows. Produces ATP from ADP in the presence of a proton gradient across the membrane. The gamma chain is believed to be important in regulating ATPase activity and the flow of protons through the CF(0) complex. This chain is ATP synthase gamma chain, found in Xylella fastidiosa (strain 9a5c).